Here is a 283-residue protein sequence, read N- to C-terminus: MQTESSRREAAAATEQLFAANRAQGSVQFDVRAVDGVTRRGKLHESGSLRVRFPSPEQQGLSAVLVNTAGGVAGGDRFSIDIAVGESARLTLTTAAAEKIYRSHGPSAQLDITLKVADDGHLGWLPQETILFDQARVERRIDIELAPRASLLLCESVIFGRSAMGETMRHGRFIDRWRLRVGGKLVFAETVRLDGEIGALLDRPAVAKGGVAVGTALIAPGDSELVERLRENADLFGAEVGITAWNGIAMARFCAQDAARLRADMMAVLRRAAGRALPRLWLS.

It belongs to the UreD family. As to quaternary structure, ureD, UreF and UreG form a complex that acts as a GTP-hydrolysis-dependent molecular chaperone, activating the urease apoprotein by helping to assemble the nickel containing metallocenter of UreC. The UreE protein probably delivers the nickel.

The protein localises to the cytoplasm. In terms of biological role, required for maturation of urease via the functional incorporation of the urease nickel metallocenter. This is Urease accessory protein UreD from Rhodopseudomonas palustris (strain BisB5).